We begin with the raw amino-acid sequence, 180 residues long: Adenine phosphoribosyltransferase (180 aa).

S2 is subject to N-acetylserine. 3 positions are modified to phosphoserine: S4, S15, and S30. Y60 is subject to Phosphotyrosine. A Phosphoserine modification is found at S66. K114 carries the post-translational modification N6-acetyllysine. T135 carries the post-translational modification Phosphothreonine.

This sequence belongs to the purine/pyrimidine phosphoribosyltransferase family. Homodimer.

The protein localises to the cytoplasm. It catalyses the reaction AMP + diphosphate = 5-phospho-alpha-D-ribose 1-diphosphate + adenine. It participates in purine metabolism; AMP biosynthesis via salvage pathway; AMP from adenine: step 1/1. Functionally, catalyzes a salvage reaction resulting in the formation of AMP, that is energically less costly than de novo synthesis. In Mus pahari (Gairdner's shrew-mouse), this protein is Adenine phosphoribosyltransferase.